We begin with the raw amino-acid sequence, 499 residues long: MEKKYVLAIDQGTTSSRAMLFDRQGKVAGVAQREFGQIFPQPGWVEHNPREIMTSVYTTITELLNNAQIDAREISGIGITNQRETAVVWDKATGQPIYNAIVWQSRQTKDICTQLKEAGHEQMVRDKTGLLIDAYFSGTKVKWILDHVDGARERARKGELAFGTIDSWLIWNLTGGKVHVTDYTNASRTMMYNIHTLEWDAELLEMLDVPAQMLPEVRSSSEVYGMTQTQYFYGEQVPIAGIAGDQQAALFGQACFEPGMAKNTYGTGCFMLMNTGDKAVASKAGLLTTIAWGIDGKVEYALEGAIFVAGSVVQWLRDGLRMFGKASDSQAYAERAGDNDGVYFVPAFVGLGAPYWRSDIRGAVFGLTRGTSKEHFVRAAVESMAYQTRDVLTAMQSDSGIELKELRADGGAIANDFMAQFQSDILNVPVLRPEVAETTALGAAYLAGLATGFWSSREEIAKQWAVDRRFEPNMPEERREQLYAGWQQAVEATMGFRIS.

ADP is bound at residue Thr-13. The ATP site is built by Thr-13, Thr-14, and Ser-15. Thr-13 is a sn-glycerol 3-phosphate binding site. An ADP-binding site is contributed by Arg-17. Sn-glycerol 3-phosphate is bound by residues Arg-83, Glu-84, Tyr-135, and Asp-245. Arg-83, Glu-84, Tyr-135, Asp-245, and Gln-246 together coordinate glycerol. Positions 267 and 310 each coordinate ADP. ATP-binding residues include Thr-267, Gly-310, Gln-314, and Gly-411. Residues Gly-411 and Asn-415 each coordinate ADP.

It belongs to the FGGY kinase family.

The catalysed reaction is glycerol + ATP = sn-glycerol 3-phosphate + ADP + H(+). It functions in the pathway polyol metabolism; glycerol degradation via glycerol kinase pathway; sn-glycerol 3-phosphate from glycerol: step 1/1. Inhibited by fructose 1,6-bisphosphate (FBP). In terms of biological role, key enzyme in the regulation of glycerol uptake and metabolism. Catalyzes the phosphorylation of glycerol to yield sn-glycerol 3-phosphate. The polypeptide is Glycerol kinase (Xanthomonas campestris pv. campestris (strain ATCC 33913 / DSM 3586 / NCPPB 528 / LMG 568 / P 25)).